The following is a 513-amino-acid chain: Histidine ammonia-lyase (513 aa).

Positions Ala143 to Gly145 form a cross-link, 5-imidazolinone (Ala-Gly). Ser144 bears the 2,3-didehydroalanine (Ser) mark.

It belongs to the PAL/histidase family. In terms of processing, contains an active site 4-methylidene-imidazol-5-one (MIO), which is formed autocatalytically by cyclization and dehydration of residues Ala-Ser-Gly.

Its subcellular location is the cytoplasm. It carries out the reaction L-histidine = trans-urocanate + NH4(+). It functions in the pathway amino-acid degradation; L-histidine degradation into L-glutamate; N-formimidoyl-L-glutamate from L-histidine: step 1/3. This chain is Histidine ammonia-lyase, found in Xanthomonas campestris pv. campestris (strain B100).